A 53-amino-acid polypeptide reads, in one-letter code: Toxin CjTL7 (53 aa).

The N-terminal stretch at 1 to 22 (MMIKVLLLLSSALVLFTPEAEG) is a signal peptide. Trp51 is modified (tryptophan amide).

Contains 4 disulfide bonds.

It localises to the secreted. The protein resides in the nematocyst. In terms of biological role, in vivo, only causes a weak change in behavior in shrimps (C.multidentata) (slight twitching of the walking legs), but no lethal effect is observed. No activity is observed when injected into fly larvae (M.domestica). The chain is Toxin CjTL7 from Epiactis japonica (Sea anemone).